The primary structure comprises 285 residues: Transmembrane protein 53-B (285 aa).

The chain crosses the membrane as a helical span at residues 165-185 (FLALAAFAIMVIILRIVLYPV).

This sequence belongs to the TMEM53 family.

It is found in the nucleus outer membrane. In terms of biological role, ensures normal bone formation, through the negative regulation of bone morphogenetic protein (BMP) signaling in osteoblast lineage cells by blocking cytoplasm-nucleus translocation of phosphorylated SMAD proteins. The protein is Transmembrane protein 53-B (tmem53-b) of Xenopus laevis (African clawed frog).